Consider the following 165-residue polypeptide: ER membrane protein complex subunit 5 (165 aa).

Residues 1–3 (MAP) are Cytoplasmic-facing. The helical transmembrane segment at 4–22 (SLWKGLVGIGLFALAHAAF) threads the bilayer. Over 23–77 (SAAQHYFPSSGIKWKRKCEFLQSSSFQDKIFRSMYYVYDRSYMRLTEKEDESLPI) the chain is Lumenal. Residues 78 to 97 (DIVLQTLLAFAVTCYGIVHI) form a helical membrane-spanning segment. Topologically, residues 98–165 (AGEFKDMDAT…KLRKLESLRR (68 aa)) are cytoplasmic. S154 carries the phosphoserine modification.

It belongs to the membrane magnesium transporter (TC 1.A.67) family. As to quaternary structure, component of the ER membrane protein complex (EMC).

It is found in the endoplasmic reticulum membrane. Its subcellular location is the golgi apparatus membrane. The protein resides in the early endosome membrane. Part of the endoplasmic reticulum membrane protein complex (EMC) that enables the energy-independent insertion into endoplasmic reticulum membranes of newly synthesized membrane proteins. Preferentially accommodates proteins with transmembrane domains that are weakly hydrophobic or contain destabilizing features such as charged and aromatic residues. Involved in the cotranslational insertion of multi-pass membrane proteins in which stop-transfer membrane-anchor sequences become ER membrane spanning helices. It is also required for the post-translational insertion of tail-anchored/TA proteins in endoplasmic reticulum membranes. By mediating the proper cotranslational insertion of N-terminal transmembrane domains in an N-exo topology, with translocated N-terminus in the lumen of the ER, controls the topology of multi-pass membrane proteins like the G protein-coupled receptors. By regulating the insertion of various proteins in membranes, it is indirectly involved in many cellular processes. May be involved in Mg(2+) transport. This chain is ER membrane protein complex subunit 5, found in Bos taurus (Bovine).